The primary structure comprises 286 residues: Nucleotide-binding protein VC_2532 (286 aa).

8 to 15 (GQSGAGKS) serves as a coordination point for ATP. 56–59 (DIRN) provides a ligand contact to GTP.

It belongs to the RapZ-like family.

Functionally, displays ATPase and GTPase activities. The protein is Nucleotide-binding protein VC_2532 of Vibrio cholerae serotype O1 (strain ATCC 39315 / El Tor Inaba N16961).